Consider the following 473-residue polypeptide: Pre-mRNA-splicing factor prp5 (473 aa).

WD repeat units lie at residues G161–D191, G203–D233, G245–D275, G287–D317, H329–K358, G370–D399, and D419–K449.

This sequence belongs to the WD repeat PRL1/PRL2 family. As to quaternary structure, belongs to the 40S cdc5-associated complex (or cwf complex), a spliceosome sub-complex reminiscent of a late-stage spliceosome composed of the U2, U5 and U6 snRNAs and at least brr2, cdc5, cwf2/prp3, cwf3/syf1, cwf4/syf3, cwf5/ecm2, spp42/cwf6, cwf7/spf27, cwf8, cwf9, cwf10, cwf11, cwf12, prp45/cwf13, cwf14, cwf15, cwf16, cwf17, cwf18, cwf19, cwf20, cwf21, cwf22, cwf23, cwf24, cwf25, cwf26, cyp7/cwf27, cwf28, cwf29/ist3, lea1, msl1, prp5/cwf1, prp10, prp12/sap130, prp17, prp22, sap61, sap62, sap114, sap145, slu7, smb1, smd1, smd3, smf1, smg1 and syf2.

Its subcellular location is the nucleus. Its function is as follows. Required for both cell cycle progression at G2/M and pre-mRNA splicing. Interacts genetically with the PRP4 kinase. This is Pre-mRNA-splicing factor prp5 (prp5) from Schizosaccharomyces pombe (strain 972 / ATCC 24843) (Fission yeast).